Consider the following 858-residue polypeptide: MTNKLRIYEFAKLLEIQNKDLMDILNKLNIEHKNHMSALEENDINLVLEYILQEKEKEKEHAEKRRERLPSHKEGRSGERQAKTFDEKKHTRHGEKASHPYDKRGEQKLQQKSQQDVRQKFDREKRERHQEAIAKESGKKLEGQERKAVVHDQKVVELFPQQEPEKRQAAKPKYEVAKEQKIEKRYQDKVAAKQKTEKATKHRKQLFNVDELTQEEVTVDREELEKIDKEVEDTLLEEEYLQEKHVRRGKKEKLKKRSKEQKEVLKLQTKTVQEEKKEEIVKIPEKITVGEFANLIGKPAAEVIKKLIMLGVMANINQEIDFDVASLIAEDYGFKVEKEIIKSEEEILLEDQEDPEETLQPRPPVVVVMGHVDHGKTSLLDAIRNTNVTEKEAGGITQHIGASVVEVNGRKITFLDTPGHEAFTAMRARGAQVTDIAVLVVAADDGVMPQTVEAINHAKAANVTIIVAINKIDKPEANPERVKQQLSEYGLIPEEWGGDTVFVNVSAKKKIGIDHLLEMILLVADLLELKANPNRPARGRVIEAKLDKGRGPVATVLVQKGTLKVGDYVVVGSTWGRVRAMIDDKGQRIKEAGPSMPVEILGLEDVPTAGDELVCVKDEKTAKTIAQIRQERLKEEKMQQSKISLDELFERIQKGQLKELRVIIKADVQGSVEALKSAIERLSNDKVTVKVIHAAVGAITESDVTLASASDAIIIGFNVRPEVGAMSLAEKEKVDIRMYRIIYDVINDIKAAMKGLLEPVYKEVIIGHAEVRQIFKSSSVGTIAGCYVLDGKITRTSNARIIRDGVVVYEGKLASLKRFKDDVREVAAGYECGMTFEKFNDIKEGDIVEAFEMQKVES.

The tract at residues 59–147 (KEHAEKRRER…GKKLEGQERK (89 aa)) is disordered. Positions 361 to 530 (PRPPVVVVMG…LLVADLLELK (170 aa)) constitute a tr-type G domain. The segment at 370 to 377 (GHVDHGKT) is G1. 370 to 377 (GHVDHGKT) serves as a coordination point for GTP. Residues 395–399 (GITQH) are G2. A G3 region spans residues 416–419 (DTPG). Residues 416 to 420 (DTPGH) and 470 to 473 (NKID) each bind GTP. The interval 470-473 (NKID) is G4. Positions 506–508 (SAK) are G5.

It belongs to the TRAFAC class translation factor GTPase superfamily. Classic translation factor GTPase family. IF-2 subfamily.

The protein localises to the cytoplasm. Functionally, one of the essential components for the initiation of protein synthesis. Protects formylmethionyl-tRNA from spontaneous hydrolysis and promotes its binding to the 30S ribosomal subunits. Also involved in the hydrolysis of GTP during the formation of the 70S ribosomal complex. This chain is Translation initiation factor IF-2, found in Caldicellulosiruptor saccharolyticus (strain ATCC 43494 / DSM 8903 / Tp8T 6331).